Here is a 139-residue protein sequence, read N- to C-terminus: Tol-Pal system protein TolR (139 aa).

A helical transmembrane segment spans residues 15–35 (IVPFLDVLLVLVLIFMATAPI).

Belongs to the ExbD/TolR family. The Tol-Pal system is composed of five core proteins: the inner membrane proteins TolA, TolQ and TolR, the periplasmic protein TolB and the outer membrane protein Pal. They form a network linking the inner and outer membranes and the peptidoglycan layer.

It localises to the cell inner membrane. In terms of biological role, part of the Tol-Pal system, which plays a role in outer membrane invagination during cell division and is important for maintaining outer membrane integrity. This Haemophilus influenzae (strain ATCC 51907 / DSM 11121 / KW20 / Rd) protein is Tol-Pal system protein TolR.